The following is an 85-amino-acid chain: Homeobox protein liguleless 3 (85 aa).

The 21-residue stretch at 1-21 folds into the ELK domain; the sequence is ELKEMLLKKYSGCLSRLRSEF. The homeobox; TALE-type DNA-binding region spans 22 to 85; sequence LKKRKKGKLP…NQRKRHWKPS (64 aa).

The protein belongs to the TALE/KNOX homeobox family.

The protein resides in the nucleus. Probably binds to the DNA sequence 5'-TGAC-3'. The protein is Homeobox protein liguleless 3 (LG3) of Zea mays (Maize).